Reading from the N-terminus, the 351-residue chain is uncharacterized protein (351 aa).

The N-terminal stretch at 1 to 32 (MKNKKRVFIASSLSCVLLLLSAANTEANSANK) is a signal peptide. The interval 26-74 (EANSANKDSQDQTKKEHVDKAQQKEKRNVNDKDKNTPGPDDIGKNGKVT) is disordered. A compositionally biased stretch (basic and acidic residues) spans 33 to 60 (DSQDQTKKEHVDKAQQKEKRNVNDKDKN).

The protein belongs to the aerolysin family.

This is an uncharacterized protein from Staphylococcus aureus (strain MRSA252).